The chain runs to 137 residues: MQQTLSIIKPDAVEKGVIGKIIDRFESAGLRIAAAKKIKLSKCDASQFYAIHKERSFFNDLVDYMTSGPVVVMVLEGENAVAKNRELMGATDPKKAAPGTIRADFAESIDANAVHGSDSEENAKNEIAFFFAGREIC.

ATP-binding residues include K9, F57, R85, T91, R102, and N112. The active-site Pros-phosphohistidine intermediate is the H115.

Belongs to the NDK family. Homotetramer. The cofactor is Mg(2+).

The protein localises to the cytoplasm. It catalyses the reaction a 2'-deoxyribonucleoside 5'-diphosphate + ATP = a 2'-deoxyribonucleoside 5'-triphosphate + ADP. The catalysed reaction is a ribonucleoside 5'-diphosphate + ATP = a ribonucleoside 5'-triphosphate + ADP. In terms of biological role, major role in the synthesis of nucleoside triphosphates other than ATP. The ATP gamma phosphate is transferred to the NDP beta phosphate via a ping-pong mechanism, using a phosphorylated active-site intermediate. The protein is Nucleoside diphosphate kinase of Campylobacter hominis (strain ATCC BAA-381 / DSM 21671 / CCUG 45161 / LMG 19568 / NCTC 13146 / CH001A).